Reading from the N-terminus, the 361-residue chain is Peptide chain release factor 1 (361 aa).

Q235 carries the N5-methylglutamine modification. Residues 287 to 309 (QKEASAMRSAQVGSGDRSERIRT) are disordered.

This sequence belongs to the prokaryotic/mitochondrial release factor family. Methylated by PrmC. Methylation increases the termination efficiency of RF1.

It is found in the cytoplasm. Functionally, peptide chain release factor 1 directs the termination of translation in response to the peptide chain termination codons UAG and UAA. This is Peptide chain release factor 1 from Chlamydia caviae (strain ATCC VR-813 / DSM 19441 / 03DC25 / GPIC) (Chlamydophila caviae).